The primary structure comprises 63 residues: Crotasin (63 aa).

The first 22 residues, 1–22 (MKILYLLSAFLFLAFLSESGNA), serve as a signal peptide directing secretion. Cystine bridges form between Cys-26–Cys-56, Cys-33–Cys-50, and Cys-38–Cys-57.

Highly expressed in pancreas, heart, liver, brain and kidney. Expressed to a low extent in the venom gland.

The protein resides in the secreted. The sequence is that of Crotasin from Crotalus durissus terrificus (South American rattlesnake).